Here is a 434-residue protein sequence, read N- to C-terminus: Glycylpeptide N-tetradecanoyltransferase 1 (434 aa).

The interval methionine 1–leucine 24 is disordered. Alanine 2 carries the N-acetylalanine modification. Tetradecanoyl-CoA-binding positions include histidine 48 to tryptophan 51, leucine 184 to valine 186, and serine 192 to alanine 196. Leucine 434 acts as the Proton acceptor; via carboxylate in catalysis.

Belongs to the NMT family. As to expression, expressed ubiquitously, with higher levels in young tissues (at protein level).

It localises to the cytoplasm. It catalyses the reaction N-terminal glycyl-[protein] + tetradecanoyl-CoA = N-tetradecanoylglycyl-[protein] + CoA + H(+). Functionally, adds a myristoyl group to the N-terminal glycine residue of certain cellular proteins. Can also use decanoyl-CoA and lauroyl-CoA as substrates. The chain is Glycylpeptide N-tetradecanoyltransferase 1 (NMT1) from Arabidopsis thaliana (Mouse-ear cress).